A 334-amino-acid chain; its full sequence is Ornithine carbamoyltransferase, catabolic (334 aa).

Carbamoyl phosphate-binding positions include Ser57–Thr60, Gln84, Arg108, and His135–Gln138. L-ornithine is bound by residues Asn168, Asp232, and Ser236 to Met237. Carbamoyl phosphate contacts are provided by residues Cys274–Leu275 and Arg321.

This sequence belongs to the aspartate/ornithine carbamoyltransferase superfamily. OTCase family.

It localises to the cytoplasm. The enzyme catalyses carbamoyl phosphate + L-ornithine = L-citrulline + phosphate + H(+). It participates in amino-acid degradation; L-arginine degradation via ADI pathway; carbamoyl phosphate from L-arginine: step 2/2. Its function is as follows. Reversibly catalyzes the transfer of the carbamoyl group from carbamoyl phosphate (CP) to the N(epsilon) atom of ornithine (ORN) to produce L-citrulline. The polypeptide is Ornithine carbamoyltransferase, catabolic (arcB) (Avibacterium paragallinarum (Haemophilus gallinarum)).